The following is a 349-amino-acid chain: Spermidine/putrescine import ATP-binding protein PotA (349 aa).

The region spanning 7–237 (IELKGITKSY…PANSFVAKFI (231 aa)) is the ABC transporter domain. 39–46 (GPSGCGKT) is an ATP binding site.

It belongs to the ABC transporter superfamily. Spermidine/putrescine importer (TC 3.A.1.11.1) family. In terms of assembly, the complex is composed of two ATP-binding proteins (PotA), two transmembrane proteins (PotB and PotC) and a solute-binding protein (PotD).

The protein resides in the cell membrane. The enzyme catalyses ATP + H2O + polyamine-[polyamine-binding protein]Side 1 = ADP + phosphate + polyamineSide 2 + [polyamine-binding protein]Side 1.. In terms of biological role, part of the ABC transporter complex PotABCD involved in spermidine/putrescine import. Responsible for energy coupling to the transport system. This chain is Spermidine/putrescine import ATP-binding protein PotA, found in Clostridium perfringens (strain SM101 / Type A).